A 417-amino-acid polypeptide reads, in one-letter code: Tryptophan synthase beta chain (417 aa).

Residue Lys-110 is modified to N6-(pyridoxal phosphate)lysine.

It belongs to the TrpB family. As to quaternary structure, tetramer of two alpha and two beta chains. Requires pyridoxal 5'-phosphate as cofactor.

The enzyme catalyses (1S,2R)-1-C-(indol-3-yl)glycerol 3-phosphate + L-serine = D-glyceraldehyde 3-phosphate + L-tryptophan + H2O. The protein operates within amino-acid biosynthesis; L-tryptophan biosynthesis; L-tryptophan from chorismate: step 5/5. In terms of biological role, the beta subunit is responsible for the synthesis of L-tryptophan from indole and L-serine. The sequence is that of Tryptophan synthase beta chain from Prochlorococcus marinus (strain NATL1A).